A 483-amino-acid polypeptide reads, in one-letter code: MERYMSLKKKISYSELIGSAKANELQTQLQAYVPGKDPNIVVEHEPSKNAAKELIRGDYRWGHQGDDKSETFQLTYSFLESEPDNMPWHITGFSAFNEEQRTAAKLSIQSWTDVANINFTETTDSDKAHITFGFFDASLTGSYAFAYLPSPESKQSGTWYNLKSRTFSENDIGVNGYGRQTFTHEIGHTLGLEHPAAYNASDKERPTYKKSATYFEDSRAYTVMSYFGEKNTRTDFKGIYSSAPLLNDISAIQEVYGANNTTRTDDTVYGFNSNTDRDFFTAKDENSKLLFTAWDAGGNDTFDFSGFTQDQRINLNEASFSDVGGLKGNVSIARGVTIENAIGGSGNDILIGNDAENILKGGAGDDIIYGGLGADQLWGGEGKDTFVYLSAKESPPLERDWIHDFVSGEDKIDVSLFDLGEAGKGGVKFVREFTGAVGEAVLRYDTVNKVNDFAINLGDKFSYDDFWVKIVGEPILESDFILA.

His184 contacts Zn(2+). The active site involves Glu185. Zn(2+)-binding residues include His188 and His194. Positions 263, 266, 295, 297, 298, 300, 337, and 339 each coordinate Ca(2+). Hemolysin-type calcium-binding repeat units lie at residues Ile342–Leu359 and Lys360–Leu377.

It belongs to the peptidase M10B family. It depends on Zn(2+) as a cofactor. Ca(2+) is required as a cofactor.

It localises to the secreted. It carries out the reaction Preferential cleavage of bonds with hydrophobic residues in P1'.. Its activity is regulated as follows. Inhibited by 8 mM 1,10-phenanthroline and 10 mM EDTA, but not by PMSF. Functionally, involved in the inhibition of insect antibacterial peptides. Reduces the antibacterial activity of G.mellonella hemolymph by 50%. Reduces the antibacterial activity of cecropin A by 80% and cecropin B by 75%. The protein is Serralysin of Photorhabdus sp. (strain Az29).